We begin with the raw amino-acid sequence, 197 residues long: dITP/XTP pyrophosphatase (197 aa).

7–12 (TGNEQK) is a substrate binding site. Residues Glu-44 and Asp-73 each coordinate Mg(2+). Asp-73 functions as the Proton acceptor in the catalytic mechanism. Residues Thr-74, 156–159 (FGYD), Lys-179, and 184–185 (HR) contribute to the substrate site.

The protein belongs to the HAM1 NTPase family. In terms of assembly, homodimer. Requires Mg(2+) as cofactor.

The enzyme catalyses XTP + H2O = XMP + diphosphate + H(+). The catalysed reaction is dITP + H2O = dIMP + diphosphate + H(+). It carries out the reaction ITP + H2O = IMP + diphosphate + H(+). Pyrophosphatase that catalyzes the hydrolysis of nucleoside triphosphates to their monophosphate derivatives, with a high preference for the non-canonical purine nucleotides XTP (xanthosine triphosphate), dITP (deoxyinosine triphosphate) and ITP. Seems to function as a house-cleaning enzyme that removes non-canonical purine nucleotides from the nucleotide pool, thus preventing their incorporation into DNA/RNA and avoiding chromosomal lesions. This is dITP/XTP pyrophosphatase from Elusimicrobium minutum (strain Pei191).